We begin with the raw amino-acid sequence, 87 residues long: Diazepam-binding inhibitor-like 5 (87 aa).

Residues 2 to 87 form the ACB domain; that stretch reads SQVEFEMACA…VEELKKNETC (86 aa). An acyl-CoA is bound by residues 29 to 33, K55, and Y74; that span reads YSFYK.

The protein belongs to the ACBP family. As to expression, testis.

It localises to the cytoplasm. May be involved in the energy metabolism of the mature sperm. The polypeptide is Diazepam-binding inhibitor-like 5 (Dbil5) (Rattus norvegicus (Rat)).